Here is a 601-residue protein sequence, read N- to C-terminus: ATP-dependent lipid A-core flippase (601 aa).

The next 6 helical transmembrane spans lie at 35–55 (FAVAMVCMLIAGALTSSLAFL), 77–97 (LAIILIYLVKGGCSYFQAILM), 150–170 (AVTSLMKDSFTLICLVFVIFY), 173–193 (WQLAIIAMIVFPLTIYPIAKF), 263–283 (MEFLGGIGIAAIIFYGGYQVI), and 286–306 (SSTPGTFFSFLTALIMLYEPV). One can recognise an ABC transmembrane type-1 domain in the interval 36–318 (AVAMVCMLIA…LTNVNNTIQQ (283 aa)). The region spanning 352–585 (IEIRNISFAY…RGEYYKLHQL (234 aa)) is the ABC transporter domain. 384 to 391 (GMSGGGKT) is a binding site for ATP.

The protein belongs to the ABC transporter superfamily. Lipid exporter (TC 3.A.1.106) family. Homodimer.

The protein resides in the cell inner membrane. The catalysed reaction is ATP + H2O + lipid A-core oligosaccharideSide 1 = ADP + phosphate + lipid A-core oligosaccharideSide 2.. Its function is as follows. Involved in lipopolysaccharide (LPS) biosynthesis. Translocates lipid A-core from the inner to the outer leaflet of the inner membrane. Transmembrane domains (TMD) form a pore in the inner membrane and the ATP-binding domain (NBD) is responsible for energy generation. This is ATP-dependent lipid A-core flippase from Syntrophus aciditrophicus (strain SB).